The primary structure comprises 222 residues: Putative N-acetylmannosamine-6-phosphate 2-epimerase (222 aa).

It belongs to the NanE family.

It carries out the reaction an N-acyl-D-glucosamine 6-phosphate = an N-acyl-D-mannosamine 6-phosphate. It functions in the pathway amino-sugar metabolism; N-acetylneuraminate degradation; D-fructose 6-phosphate from N-acetylneuraminate: step 3/5. Functionally, converts N-acetylmannosamine-6-phosphate (ManNAc-6-P) to N-acetylglucosamine-6-phosphate (GlcNAc-6-P). The sequence is that of Putative N-acetylmannosamine-6-phosphate 2-epimerase from Staphylococcus aureus (strain USA300).